Consider the following 136-residue polypeptide: Small ribosomal subunit protein uS12 (136 aa).

At Asp-89 the chain carries 3-methylthioaspartic acid. Residues 104–136 form a disordered region; that stretch reads TAGVNGRTQRRSKYGAKRPKPGQAAAAAKGKKK. Basic residues predominate over residues 111-123; the sequence is TQRRSKYGAKRPK. The span at 124–136 shows a compositional bias: low complexity; the sequence is PGQAAAAAKGKKK.

Belongs to the universal ribosomal protein uS12 family. Part of the 30S ribosomal subunit. Contacts proteins S8 and S17. May interact with IF1 in the 30S initiation complex.

Its function is as follows. With S4 and S5 plays an important role in translational accuracy. Functionally, interacts with and stabilizes bases of the 16S rRNA that are involved in tRNA selection in the A site and with the mRNA backbone. Located at the interface of the 30S and 50S subunits, it traverses the body of the 30S subunit contacting proteins on the other side and probably holding the rRNA structure together. The combined cluster of proteins S8, S12 and S17 appears to hold together the shoulder and platform of the 30S subunit. The polypeptide is Small ribosomal subunit protein uS12 (Parabacteroides distasonis (strain ATCC 8503 / DSM 20701 / CIP 104284 / JCM 5825 / NCTC 11152)).